Here is a 341-residue protein sequence, read N- to C-terminus: Phenylalanine--tRNA ligase alpha subunit (341 aa).

Glu-256 is a binding site for Mg(2+).

It belongs to the class-II aminoacyl-tRNA synthetase family. Phe-tRNA synthetase alpha subunit type 1 subfamily. Tetramer of two alpha and two beta subunits. It depends on Mg(2+) as a cofactor.

It is found in the cytoplasm. It carries out the reaction tRNA(Phe) + L-phenylalanine + ATP = L-phenylalanyl-tRNA(Phe) + AMP + diphosphate + H(+). The polypeptide is Phenylalanine--tRNA ligase alpha subunit (Leptospira borgpetersenii serovar Hardjo-bovis (strain JB197)).